The chain runs to 296 residues: Nitrogenase iron protein 1 (296 aa).

11–18 (GKGGIGKS) contributes to the ATP binding site. Cys-99 is a [4Fe-4S] cluster binding site. ADP-ribosylarginine; by dinitrogenase reductase ADP-ribosyltransferase is present on Arg-102. Cys-133 provides a ligand contact to [4Fe-4S] cluster.

Belongs to the NifH/BchL/ChlL family. In terms of assembly, homodimer. Requires [4Fe-4S] cluster as cofactor. In terms of processing, the reversible ADP-ribosylation of Arg-102 inactivates the nitrogenase reductase and regulates nitrogenase activity.

The catalysed reaction is N2 + 8 reduced [2Fe-2S]-[ferredoxin] + 16 ATP + 16 H2O = H2 + 8 oxidized [2Fe-2S]-[ferredoxin] + 2 NH4(+) + 16 ADP + 16 phosphate + 6 H(+). The key enzymatic reactions in nitrogen fixation are catalyzed by the nitrogenase complex, which has 2 components: the iron protein and the molybdenum-iron protein. The chain is Nitrogenase iron protein 1 (nifH1) from Azorhizobium caulinodans (strain ATCC 43989 / DSM 5975 / JCM 20966 / LMG 6465 / NBRC 14845 / NCIMB 13405 / ORS 571).